We begin with the raw amino-acid sequence, 354 residues long: Phosphate acyltransferase (354 aa).

The protein belongs to the PlsX family. In terms of assembly, homodimer. Probably interacts with PlsY.

It localises to the cytoplasm. The enzyme catalyses a fatty acyl-[ACP] + phosphate = an acyl phosphate + holo-[ACP]. The protein operates within lipid metabolism; phospholipid metabolism. Catalyzes the reversible formation of acyl-phosphate (acyl-PO(4)) from acyl-[acyl-carrier-protein] (acyl-ACP). This enzyme utilizes acyl-ACP as fatty acyl donor, but not acyl-CoA. The protein is Phosphate acyltransferase of Nitrobacter hamburgensis (strain DSM 10229 / NCIMB 13809 / X14).